The chain runs to 336 residues: Isopentenyl-diphosphate delta-isomerase (336 aa).

5-6 (RK) contributes to the substrate binding site. Residues 60–62 (AMT), S90, and N117 contribute to the FMN site. A substrate-binding site is contributed by Q147. E148 is a binding site for Mg(2+). FMN contacts are provided by residues K179, S204, T209, 253 to 255 (GVR), and 274 to 275 (SR).

Belongs to the IPP isomerase type 2 family. As to quaternary structure, homooctamer. Dimer of tetramers. Requires FMN as cofactor. The cofactor is NADPH. Mg(2+) serves as cofactor.

The protein localises to the cytoplasm. It catalyses the reaction isopentenyl diphosphate = dimethylallyl diphosphate. In terms of biological role, involved in the biosynthesis of isoprenoids. Catalyzes the 1,3-allylic rearrangement of the homoallylic substrate isopentenyl (IPP) to its allylic isomer, dimethylallyl diphosphate (DMAPP). This is Isopentenyl-diphosphate delta-isomerase from Streptococcus pneumoniae (strain ATCC BAA-255 / R6).